The primary structure comprises 504 residues: ATP synthase subunit alpha (504 aa).

ATP is bound at residue 171–178; sequence GDRATGKT.

It belongs to the ATPase alpha/beta chains family. F-type ATPases have 2 components, CF(1) - the catalytic core - and CF(0) - the membrane proton channel. CF(1) has five subunits: alpha(3), beta(3), gamma(1), delta(1), epsilon(1). CF(0) has three main subunits: a(1), b(2) and c(9-12). The alpha and beta chains form an alternating ring which encloses part of the gamma chain. CF(1) is attached to CF(0) by a central stalk formed by the gamma and epsilon chains, while a peripheral stalk is formed by the delta and b chains.

Its subcellular location is the cell inner membrane. It carries out the reaction ATP + H2O + 4 H(+)(in) = ADP + phosphate + 5 H(+)(out). Functionally, produces ATP from ADP in the presence of a proton gradient across the membrane. The alpha chain is a regulatory subunit. The chain is ATP synthase subunit alpha from Sulfurihydrogenibium sp. (strain YO3AOP1).